We begin with the raw amino-acid sequence, 58 residues long: U7-ctenitoxin-Pr1a (58 aa).

6 disulfides stabilise this stretch: cysteine 2–cysteine 16, cysteine 9–cysteine 22, cysteine 13–cysteine 48, cysteine 15–cysteine 40, cysteine 18–cysteine 55, and cysteine 24–cysteine 38.

As to expression, expressed by the venom gland.

The protein localises to the secreted. Its function is as follows. Probable neurotoxin. The chain is U7-ctenitoxin-Pr1a from Phoneutria reidyi (Brazilian Amazonian armed spider).